A 267-amino-acid chain; its full sequence is Strigolactone esterase RMS3 (267 aa).

The active-site Nucleophile is serine 96. Residues aspartate 218 and histidine 247 contribute to the active site.

The protein belongs to the AB hydrolase superfamily.

It localises to the cytoplasm. Its subcellular location is the nucleus. Its function is as follows. Involved in strigolactone signaling pathway. Functions downstream of strigolactone synthesis, as a component of hormone signaling and as an enzyme that participates in the conversion of strigolactones to the bioactive form. Binds and hydrolyzes the synthetic strigolactone analog GR24 and its enantiomers in vitro. Forms a stable covalent complex with the D-ring of strigolactone, which is essential for hormone bioactivity. The D-ring is attached to His-247 of the catalytic triad. The hydrolysis of strigolactone into a covalently linked intermediate molecule is required to trigger strigolactone signaling. This mechanism defines RMS3 as a non-canonical hormone receptor with dual functions to generate and sense the active form of strigolactone. Strigolactones are hormones that inhibit tillering and shoot branching through the MAX-dependent pathway, contribute to the regulation of shoot architectural response to phosphate-limiting conditions and function as rhizosphere signal that stimulates hyphal branching of arbuscular mycorrhizal fungi and trigger seed germination of root parasitic weeds. This Pisum sativum (Garden pea) protein is Strigolactone esterase RMS3.